Here is a 356-residue protein sequence, read N- to C-terminus: Alanine racemase (356 aa).

Catalysis depends on Lys-34, which acts as the Proton acceptor; specific for D-alanine. Position 34 is an N6-(pyridoxal phosphate)lysine (Lys-34). Arg-129 contacts substrate. Catalysis depends on Tyr-253, which acts as the Proton acceptor; specific for L-alanine. Met-301 serves as a coordination point for substrate.

It belongs to the alanine racemase family. Pyridoxal 5'-phosphate serves as cofactor.

It carries out the reaction L-alanine = D-alanine. It participates in amino-acid biosynthesis; D-alanine biosynthesis; D-alanine from L-alanine: step 1/1. Catalyzes the interconversion of L-alanine and D-alanine. May also act on other amino acids. The chain is Alanine racemase (alr) from Nitrosococcus oceani (strain ATCC 19707 / BCRC 17464 / JCM 30415 / NCIMB 11848 / C-107).